We begin with the raw amino-acid sequence, 339 residues long: 2,3,4,5-tetrahydropyridine-2,6-dicarboxylate N-succinyltransferase (339 aa).

Position 180 (D180) interacts with Mg(2+). E213 serves as the catalytic Acyl-anhydride intermediate. Succinyl-CoA contacts are provided by residues R215, G230, S233, A256, E271–A272, G279, and K300.

Belongs to the type 2 tetrahydrodipicolinate N-succinyltransferase family. As to quaternary structure, homotrimer.

It localises to the cytoplasm. It catalyses the reaction (S)-2,3,4,5-tetrahydrodipicolinate + succinyl-CoA + H2O = (S)-2-succinylamino-6-oxoheptanedioate + CoA. It functions in the pathway amino-acid biosynthesis; L-lysine biosynthesis via DAP pathway; LL-2,6-diaminopimelate from (S)-tetrahydrodipicolinate (succinylase route): step 1/3. In terms of biological role, catalyzes the conversion of the cyclic tetrahydrodipicolinate (THDP) into the acyclic N-succinyl-L-2-amino-6-oxopimelate using succinyl-CoA. In Bifidobacterium longum (strain NCC 2705), this protein is 2,3,4,5-tetrahydropyridine-2,6-dicarboxylate N-succinyltransferase.